The following is a 423-amino-acid chain: 5-hydroxytryptamine receptor 1A-alpha (423 aa).

Residues 1–47 (MDLRATSSNDSNATSGYSDTAAVDWDEGENATGSGSLPDPELSYQII) lie on the Extracellular side of the membrane. N-linked (GlcNAc...) asparagine glycosylation is found at Asn9, Asn12, and Asn30. Residues 48–68 (TSLFLGALILCSIFGNSCVVA) traverse the membrane as a helical segment. The Cytoplasmic portion of the chain corresponds to 69–82 (AIALERSLQNVANY). Residues 83–107 (LIGSLAVTDLMVSVLVLPMAALYQV) traverse the membrane as a helical segment. Residues 108–116 (LNKWTLGQD) lie on the Extracellular side of the membrane. Residues 117–141 (ICDLFIALDVLCCTSSILHLCAIAL) traverse the membrane as a helical segment. A disulfide bridge links Cys118 with Cys196. Serotonin is bound by residues Asp125 and Cys129. The short motif at 142–144 (DRY) is the DRY motif; important for ligand-induced conformation changes element. Over 142-161 (DRYWAITDPIDYVNKRTPRR) the chain is Cytoplasmic. A helical transmembrane segment spans residues 162 to 183 (AAVLISVTWLIGFSISIPPMLG). Over 184 to 202 (WRSAEDRANPDACIISQDP) the chain is Extracellular. Residues 203 to 225 (GYTIYSTFGAFYIPLILMLVLYG) form a helical membrane-spanning segment. Over 226–347 (RIFKAARFRI…LARERKTVKT (122 aa)) the chain is Cytoplasmic. The interval 311–332 (LPLPNTPQSSSHENINEKTTGT) is disordered. Positions 316 to 329 (TPQSSSHENINEKT) are enriched in polar residues. 4 residues coordinate 1D-myo-inositol 4-phosphate: Ser320, Lys346, Thr347, and Gly353. Residues 348–371 (LGIIMGTFIFCWLPFFIVALVLPF) form a helical membrane-spanning segment. Topologically, residues 372-379 (CAENCYMP) are extracellular. The helical transmembrane segment at 380-404 (EWLGAVINWLGYSNSLLNPIIYAYF) threads the bilayer. An NPxxY motif; important for ligand-induced conformation changes and signaling motif is present at residues 397-401 (NPIIY). Residues Phe404, Asn405, and Lys406 each coordinate 1D-myo-inositol 4-phosphate. Topologically, residues 405–423 (NKDFQSAFKKILRCKFHRH) are cytoplasmic.

It belongs to the G-protein coupled receptor 1 family. 5-hydroxytryptamine receptor subfamily.

The protein localises to the cell membrane. With respect to regulation, G-protein coupled receptor activity is regulated by lipids: phosphatidylinositol 4-phosphate increases HTR1A-mediated activity. G-protein coupled receptor for 5-hydroxytryptamine (serotonin). Also functions as a receptor for various drugs and psychoactive substances. Ligand binding causes a conformation change that triggers signaling via guanine nucleotide-binding proteins (G proteins) and modulates the activity of downstream effectors, such as adenylate cyclase. HTR1A is coupled to G(i)/G(o) G alpha proteins and mediates inhibitory neurotransmission: signaling inhibits adenylate cyclase activity and activates a phosphatidylinositol-calcium second messenger system that regulates the release of Ca(2+) ions from intracellular stores. Beta-arrestin family members regulate signaling by mediating both receptor desensitization and resensitization processes. In Takifugu rubripes (Japanese pufferfish), this protein is 5-hydroxytryptamine receptor 1A-alpha (htr1aa).